The following is a 166-amino-acid chain: Phosphopantetheine adenylyltransferase (166 aa).

Ser9 contacts substrate. ATP-binding positions include 9–10 (SF) and His17. Positions 41, 74, and 88 each coordinate substrate. Residues 89–91 (GLR), Glu99, and 124–130 (DSFISSS) contribute to the ATP site.

The protein belongs to the bacterial CoaD family. In terms of assembly, homohexamer. Mg(2+) serves as cofactor.

The protein resides in the cytoplasm. The enzyme catalyses (R)-4'-phosphopantetheine + ATP + H(+) = 3'-dephospho-CoA + diphosphate. It functions in the pathway cofactor biosynthesis; coenzyme A biosynthesis; CoA from (R)-pantothenate: step 4/5. Its function is as follows. Reversibly transfers an adenylyl group from ATP to 4'-phosphopantetheine, yielding dephospho-CoA (dPCoA) and pyrophosphate. This is Phosphopantetheine adenylyltransferase from Lactobacillus gasseri (strain ATCC 33323 / DSM 20243 / BCRC 14619 / CIP 102991 / JCM 1131 / KCTC 3163 / NCIMB 11718 / NCTC 13722 / AM63).